A 216-amino-acid chain; its full sequence is MTATRNVKGLLGTKLGMTQVWDENNKLIPVTVVQADSNVITQLRNAEVDGYVAVQIGYGQIDPRKVTKPLAGHFEKAGVTPRRHVVELRTADAAEYELGQELSVELFAAGQKIDVIGTTKGKGFAGVMKRHGFHGVGASHGAHKNHRKPGSIGGASTPSRVFKGMKMAGRMGAVRHTTLNLTVHAVDAEKSLLLIKGAVPGARGQVVFVRTAVKGA.

The segment at 137–158 (GASHGAHKNHRKPGSIGGASTP) is disordered.

This sequence belongs to the universal ribosomal protein uL3 family. Part of the 50S ribosomal subunit. Forms a cluster with proteins L14 and L19.

Its function is as follows. One of the primary rRNA binding proteins, it binds directly near the 3'-end of the 23S rRNA, where it nucleates assembly of the 50S subunit. This is Large ribosomal subunit protein uL3 from Pseudarthrobacter chlorophenolicus (strain ATCC 700700 / DSM 12829 / CIP 107037 / JCM 12360 / KCTC 9906 / NCIMB 13794 / A6) (Arthrobacter chlorophenolicus).